The chain runs to 228 residues: Putative N-acetylmannosamine-6-phosphate 2-epimerase (228 aa).

This sequence belongs to the NanE family.

It catalyses the reaction an N-acyl-D-glucosamine 6-phosphate = an N-acyl-D-mannosamine 6-phosphate. Its pathway is amino-sugar metabolism; N-acetylneuraminate degradation; D-fructose 6-phosphate from N-acetylneuraminate: step 3/5. In terms of biological role, converts N-acetylmannosamine-6-phosphate (ManNAc-6-P) to N-acetylglucosamine-6-phosphate (GlcNAc-6-P). In Thermosynechococcus vestitus (strain NIES-2133 / IAM M-273 / BP-1), this protein is Putative N-acetylmannosamine-6-phosphate 2-epimerase.